A 100-amino-acid polypeptide reads, in one-letter code: Urease subunit gamma (100 aa).

The protein belongs to the urease gamma subunit family. Heterotrimer of UreA (gamma), UreB (beta) and UreC (alpha) subunits. Three heterotrimers associate to form the active enzyme.

It is found in the cytoplasm. It carries out the reaction urea + 2 H2O + H(+) = hydrogencarbonate + 2 NH4(+). It functions in the pathway nitrogen metabolism; urea degradation; CO(2) and NH(3) from urea (urease route): step 1/1. The protein is Urease subunit gamma of Nitrosospira multiformis (strain ATCC 25196 / NCIMB 11849 / C 71).